The following is a 164-amino-acid chain: Respiratory growth induced protein 2 (164 aa).

It belongs to the RGI1 family.

The protein resides in the cytoplasm. Functionally, involved in the control of energetic metabolism and significantly contribute to cell fitness, especially under respiratory growth conditions. This is Respiratory growth induced protein 2 (RGI2) from Candida glabrata (strain ATCC 2001 / BCRC 20586 / JCM 3761 / NBRC 0622 / NRRL Y-65 / CBS 138) (Yeast).